Consider the following 106-residue polypeptide: uncharacterized protein (106 aa).

The first 25 residues, 1–25, serve as a signal peptide directing secretion; the sequence is MSVIKKNIPAIGLCICAFFIHSAVG.

The protein to the N-terminal of the FimA/PapA family of fimbria proteins.

This is an uncharacterized protein from Salmonella typhi.